A 340-amino-acid polypeptide reads, in one-letter code: uncharacterized protein (340 aa).

Residues 1–20 (MGGARRLKLDGSIPNQLARA) form the signal peptide.

This is an uncharacterized protein from Mycobacterium tuberculosis (strain CDC 1551 / Oshkosh).